The chain runs to 457 residues: tRNA modification GTPase MnmE (457 aa).

Positions 25, 87, and 126 each coordinate (6S)-5-formyl-5,6,7,8-tetrahydrofolate. One can recognise a TrmE-type G domain in the interval 223–377 (GISTAIIGRP…IEERINQLFF (155 aa)). Asparagine 233 lines the K(+) pocket. GTP-binding positions include 233-238 (NVGKSS), 252-258 (TDIEGTT), and 277-280 (DTAG). Position 237 (serine 237) interacts with Mg(2+). Threonine 252, isoleucine 254, and threonine 257 together coordinate K(+). Threonine 258 is a binding site for Mg(2+). Lysine 457 lines the (6S)-5-formyl-5,6,7,8-tetrahydrofolate pocket.

Belongs to the TRAFAC class TrmE-Era-EngA-EngB-Septin-like GTPase superfamily. TrmE GTPase family. Homodimer. Heterotetramer of two MnmE and two MnmG subunits. K(+) serves as cofactor.

It is found in the cytoplasm. Functionally, exhibits a very high intrinsic GTPase hydrolysis rate. Involved in the addition of a carboxymethylaminomethyl (cmnm) group at the wobble position (U34) of certain tRNAs, forming tRNA-cmnm(5)s(2)U34. The sequence is that of tRNA modification GTPase MnmE from Streptococcus sanguinis (strain SK36).